A 453-amino-acid chain; its full sequence is MATWYHQKCGLKPLAPVIPRPRTGAALSSTSRVEFLDTNKVVAGPKFQPLRCNLRERNWGLKVSAPLRVASIEEEQKSVDLTNGTNGVEHEKLPEFDPGAPPPFNLADIRAAIPKHCWVKDPWRSMSYVVRDVIAVFGLAAAAAYLNNWLVWPLYWAAQGTMFWALFVLGHDCGHGSFSNNSKLNSVVGHLLHSSILVPYHGWRISHRTHHQHHGHAENDESWHPLPEKLFRSLDTVTRMLRFTAPFPLLAFPVYLFSRSPGKTGSHFDPSSDLFVPNERKDVITSTACWAAMLGLLVGLGFVMGPIQLLKLYGVPYVIFVMWLDLVTYLHHHGHEDKLPWYRGKEWSYLRGGLTTLDRDYGWINNIHHDIGTHVIHHLFPQIPHYHLVEATEAAKPVFGKYYREPKKSAAPLPFHLIGEIIRSFKTDHFVSDTGDVVYYQTDSKINGSSKLE.

A Histidine box-1 motif is present at residues 171 to 175 (HDCGH). The short motif at 207–211 (HRTHH) is the Histidine box-2 element. The Histidine box-3 signature appears at 374-378 (HVIHH).

It belongs to the fatty acid desaturase type 1 family.

The protein resides in the plastid. The protein localises to the chloroplast membrane. It participates in lipid metabolism; polyunsaturated fatty acid biosynthesis. Its function is as follows. Chloroplast omega-3 fatty acid desaturase introduces the third double bond in the biosynthesis of 16:3 and 18:3 fatty acids, important constituents of plant membranes. It is thought to use ferredoxin as an electron donor and to act on fatty acids esterified to galactolipids, sulfolipids and phosphatidylglycerol. The polypeptide is Omega-3 fatty acid desaturase, chloroplastic (FAD7) (Glycine max (Soybean)).